The primary structure comprises 397 residues: Acetyl-CoA acetyltransferase, cytosolic (397 aa).

N-acetylmethionine is present on M1. C92 (acyl-thioester intermediate) is an active-site residue. At K200 the chain carries N6-acetyllysine. CoA contacts are provided by R223 and S226. An N6-acetyllysine mark is found at K233 and K235. Residue S252 coordinates CoA. C383 (proton donor/acceptor) is an active-site residue.

The protein belongs to the thiolase-like superfamily. Thiolase family. In terms of assembly, homotetramer.

The protein localises to the cytoplasm. It localises to the cytosol. It catalyses the reaction 2 acetyl-CoA = acetoacetyl-CoA + CoA. The protein operates within lipid metabolism; fatty acid metabolism. Its function is as follows. Involved in the biosynthetic pathway of cholesterol. This is Acetyl-CoA acetyltransferase, cytosolic (Acat2) from Mus musculus (Mouse).